Here is a 230-residue protein sequence, read N- to C-terminus: Cytidylate kinase (230 aa).

12 to 20 (GPSGAGKGT) provides a ligand contact to ATP.

Belongs to the cytidylate kinase family. Type 1 subfamily.

It is found in the cytoplasm. The catalysed reaction is CMP + ATP = CDP + ADP. It carries out the reaction dCMP + ATP = dCDP + ADP. In Shewanella oneidensis (strain ATCC 700550 / JCM 31522 / CIP 106686 / LMG 19005 / NCIMB 14063 / MR-1), this protein is Cytidylate kinase.